The primary structure comprises 364 residues: Tyrosine--tRNA ligase (364 aa).

Y41, Y167, Q171, D174, and Q189 together coordinate L-tyrosine. The 'KMSKS' region motif lies at 238 to 242 (KMSKS). ATP is bound at residue K241.

This sequence belongs to the class-I aminoacyl-tRNA synthetase family. TyrS type 4 subfamily. In terms of assembly, homodimer.

The protein localises to the cytoplasm. It catalyses the reaction tRNA(Tyr) + L-tyrosine + ATP = L-tyrosyl-tRNA(Tyr) + AMP + diphosphate + H(+). In terms of biological role, catalyzes the attachment of tyrosine to tRNA(Tyr) in a two-step reaction: tyrosine is first activated by ATP to form Tyr-AMP and then transferred to the acceptor end of tRNA(Tyr). The protein is Tyrosine--tRNA ligase of Sulfurisphaera tokodaii (strain DSM 16993 / JCM 10545 / NBRC 100140 / 7) (Sulfolobus tokodaii).